The following is a 971-amino-acid chain: MSIRVHELAKELNLSSKEVMSRLESIGVDVKNHLSAVEDQDANRLRTRIQKPQGKEQAVEPRKSVPSQESKNLTQGPAEGNRDKSQGLQVESSRVEGEGRPQGQRPMGDRPQGQRPMGDRPQGQRPMGDRPQGQRPMGDRPQGQRPMGDRPQGQRPMGDRPQGQRPMGDRPQGQRPMGDRPQGQRPMGDRPQGQRPMGDRPQGQRPMGDRPQGQRPMGDRPQGQRPMGDRPQGQRPMGDRPQGQRPMGDRPQGQRPMGDRPQGQRPMGDRPQGQRPMGDRPQGQRPMGDRPQGQRPMGDRPQGQRPMGDRPQGQRPMGDRPQGQRPPQRPPATPGTPAVEQPPKRQIGEKKKPQDRNFERKKEMEKEIRAPRGNRRNVKAAPREIRDTAPKHIVIPESLTVQDLAAKMSRKSGEVIKKLMDMGVMATINQEIDSETAVIIAGEMGVTVEVKIEKPITVIEEIEDDPAELRSRPPVVTVMGHVDHGKTSLLDAIRTTKVTASEAGGITQHIGAYQVEINGQKITFLDTPGHEAFTAMRARGAQVTDIAILVVAADDGVMPQTVEAINHAKAADVPIIVAINKIDKEESNPDRVKQELTEYGLVVEEWGGDTIAVPVSAKARMNIEQLLEMVLLVAEIKELKANPNRSATGTVIEAELDKGKGPVATVLVSKGTLNVGDIILAGSSFGRIRAMVDDKGRRVKKAGPSTPVEVQGLNEVPKAGQVFNVVDDEKHARQIAEARANERKAEEVRQTTKVSLEDLFDRIKEGEVKELNVIIKADVQGSIEALKQSLLRLSTSEVRVNPIHGGVGAITETDIMLAAASNAIIIGFNVRPDANTKATAELQGVDMRLYRVIYDAIEDVKAAMTGMLDPDFKEVVQGRAEVRQVFKVPKVGTVGGSYVLNGKITRHSKIRVIRDGIVIHEGELESLRRFKDDAKEVVEGYECGIGVANFNDIKEGDIIEAFIMEEVKRQL.

The tract at residues 39–379 (DQDANRLRTR…APRGNRRNVK (341 aa)) is disordered. Residues 53-63 (QGKEQAVEPRK) show a composition bias toward basic and acidic residues. Over residues 65–75 (VPSQESKNLTQ) the composition is skewed to polar residues. Over residues 310–326 (RPQGQRPMGDRPQGQRP) the composition is skewed to low complexity. The segment covering 342-370 (PPKRQIGEKKKPQDRNFERKKEMEKEIRA) has biased composition (basic and acidic residues). Residues 471–640 (SRPPVVTVMG…LLVAEIKELK (170 aa)) form the tr-type G domain. The G1 stretch occupies residues 480-487 (GHVDHGKT). Position 480–487 (480–487 (GHVDHGKT)) interacts with GTP. The interval 505-509 (GITQH) is G2. The G3 stretch occupies residues 526-529 (DTPG). Residues 526-530 (DTPGH) and 580-583 (NKID) contribute to the GTP site. Residues 580 to 583 (NKID) are G4. A G5 region spans residues 616-618 (SAK).

It belongs to the TRAFAC class translation factor GTPase superfamily. Classic translation factor GTPase family. IF-2 subfamily.

The protein resides in the cytoplasm. In terms of biological role, one of the essential components for the initiation of protein synthesis. Protects formylmethionyl-tRNA from spontaneous hydrolysis and promotes its binding to the 30S ribosomal subunits. Also involved in the hydrolysis of GTP during the formation of the 70S ribosomal complex. The protein is Translation initiation factor IF-2 of Desulfitobacterium hafniense (strain Y51).